The chain runs to 348 residues: Photosystem II protein D1 (348 aa).

3 helical membrane-spanning segments follow: residues 33 to 50, 122 to 137, and 146 to 160; these read YIGW…LATV, HFIL…EWEF, and WIFV…AASA. His122 is a binding site for chlorophyll a. Tyr130 is a pheophytin a binding site. [CaMn4O5] cluster-binding residues include Asp174 and Glu193. Residues 201–222 traverse the membrane as a helical segment; that stretch reads FHILGVAAVFGGSLFSAMHGSL. A chlorophyll a-binding site is contributed by His202. Residues His219 and 268–269 each bind a quinone; that span reads SF. Fe cation is bound at residue His219. His276 contributes to the Fe cation binding site. A helical transmembrane segment spans residues 278-292; the sequence is FLAAWPVIGIWFTAL. Residues His336, Glu337, Asp346, and Ala348 each contribute to the [CaMn4O5] cluster site.

It belongs to the reaction center PufL/M/PsbA/D family. PSII is composed of 1 copy each of membrane proteins PsbA, PsbB, PsbC, PsbD, PsbE, PsbF, PsbH, PsbI, PsbJ, PsbK, PsbL, PsbM, PsbT, PsbX, PsbY, PsbZ, Psb30/Ycf12, at least 3 peripheral proteins of the oxygen-evolving complex and a large number of cofactors. It forms dimeric complexes. Requires The D1/D2 heterodimer binds P680, chlorophylls that are the primary electron donor of PSII, and subsequent electron acceptors. It shares a non-heme iron and each subunit binds pheophytin, quinone, additional chlorophylls, carotenoids and lipids. D1 provides most of the ligands for the Mn4-Ca-O5 cluster of the oxygen-evolving complex (OEC). There is also a Cl(-1) ion associated with D1 and D2, which is required for oxygen evolution. The PSII complex binds additional chlorophylls, carotenoids and specific lipids. as cofactor. Post-translationally, tyr-165 forms a radical intermediate that is referred to as redox-active TyrZ, YZ or Y-Z.

The protein localises to the plastid. The protein resides in the chloroplast thylakoid membrane. The catalysed reaction is 2 a plastoquinone + 4 hnu + 2 H2O = 2 a plastoquinol + O2. Photosystem II (PSII) is a light-driven water:plastoquinone oxidoreductase that uses light energy to abstract electrons from H(2)O, generating O(2) and a proton gradient subsequently used for ATP formation. It consists of a core antenna complex that captures photons, and an electron transfer chain that converts photonic excitation into a charge separation. The D1/D2 (PsbA/PsbD) reaction center heterodimer binds P680, the primary electron donor of PSII as well as several subsequent electron acceptors. This Heterocapsa pygmaea (Dinoflagellate) protein is Photosystem II protein D1.